A 326-amino-acid chain; its full sequence is Aspartate carbamoyltransferase catalytic subunit (326 aa).

Carbamoyl phosphate-binding residues include R76 and T77. K104 lines the L-aspartate pocket. Carbamoyl phosphate-binding residues include R126, H156, and Q159. The L-aspartate site is built by R189 and R244. 2 residues coordinate carbamoyl phosphate: G285 and P286.

The protein belongs to the aspartate/ornithine carbamoyltransferase superfamily. ATCase family. Heterododecamer (2C3:3R2) of six catalytic PyrB chains organized as two trimers (C3), and six regulatory PyrI chains organized as three dimers (R2).

It carries out the reaction carbamoyl phosphate + L-aspartate = N-carbamoyl-L-aspartate + phosphate + H(+). Its pathway is pyrimidine metabolism; UMP biosynthesis via de novo pathway; (S)-dihydroorotate from bicarbonate: step 2/3. Functionally, catalyzes the condensation of carbamoyl phosphate and aspartate to form carbamoyl aspartate and inorganic phosphate, the committed step in the de novo pyrimidine nucleotide biosynthesis pathway. The sequence is that of Aspartate carbamoyltransferase catalytic subunit from Polynucleobacter asymbioticus (strain DSM 18221 / CIP 109841 / QLW-P1DMWA-1) (Polynucleobacter necessarius subsp. asymbioticus).